Reading from the N-terminus, the 633-residue chain is NADPH-dependent diflavin oxidoreductase 1 (633 aa).

Positions 5 to 149 constitute a Flavodoxin-like domain; that stretch reads CTIIYATESG…EVEKWSQELI (145 aa). FMN contacts are provided by residues 11-16, 58-61, and Asp-131; these read TESGTS and STTG. Positions 196–442 constitute an FAD-binding FR-type domain; sequence TQFYKSKLKV…FIKESGARLP (247 aa). FAD contacts are provided by residues 377–380 and 412–415; these read RPFS and GLCS. NADP(+) contacts are provided by residues Thr-456, 520-521, 528-532, and Asp-565; these read SR and KVYVQ. Residues 580 to 610 form a disordered region; it reads KNNNNNNNNNNNNNNNNNNNNNNNNNDDENN. A compositionally biased stretch (low complexity) spans 581-604; sequence NNNNNNNNNNNNNNNNNNNNNNNN. Residue Trp-633 participates in FAD binding.

This sequence belongs to the NADPH-dependent diflavin oxidoreductase NDOR1 family. In the N-terminal section; belongs to the flavodoxin family. It in the C-terminal section; belongs to the flavoprotein pyridine nucleotide cytochrome reductase family. FAD serves as cofactor. The cofactor is FMN.

The protein resides in the cytoplasm. The catalysed reaction is 2 oxidized [2Fe-2S]-[protein] + NADPH = 2 reduced [2Fe-2S]-[protein] + NADP(+) + H(+). Its function is as follows. NADPH-dependent reductase which is a central component of the cytosolic iron-sulfur (Fe-S) protein assembly (CIA) machinery. Transfers electrons from NADPH via its FAD and FMN prosthetic groups to the [2Fe-2S] cluster of the anamorsin/DRE2 homolog, another key component of the CIA machinery. In turn, this reduced cluster provides electrons for assembly of cytosolic iron-sulfur cluster proteins. This Dictyostelium discoideum (Social amoeba) protein is NADPH-dependent diflavin oxidoreductase 1 (redC).